Consider the following 450-residue polypeptide: MPVAGPLEIVSLDNEARGVGRLSNEDGTPGKVVFVEGALPGERVTYRSHRAKPSYEQATLVDILRQSASRVTPQCRFFGTCGGCSMQHLDSRAQIAIKQRVLEDDLWHLAKLRPDVVFRPIAGPDWGYRYRARLTVRHVAAKGGVLVGFHERKSSYVADMTSCEVLPPHVSALLVPLRELVGRLSIVQRMPQIEVAVGQDVTALVLRILEPLTSADEAELRAFADRHAVQFWLQPKGPDTVYPFYPLDRALTYTLPEFGITMPFKPTDFTQVNHQINRVLMSRALKLLDARPGDRLLDLFCGIGNFTLPMATRGCEVMGIEGSEALTTRALANAQHNGLDGKTTFACRNLFEVSADDIAALGRFDRWLVDPPREGALAVSKAVAELSQRGGEAAALLPGRIVYVSCNPATLARDAGLLVHEAGYRLAGAGVVNMFPHTSHVESIAVFERA.

Residues 1 to 62 enclose the TRAM domain; sequence MPVAGPLEIV…PSYEQATLVD (62 aa). [4Fe-4S] cluster contacts are provided by cysteine 75, cysteine 81, cysteine 84, and cysteine 163. Glutamine 271, phenylalanine 300, asparagine 305, glutamate 321, asparagine 349, and aspartate 370 together coordinate S-adenosyl-L-methionine. Residue cysteine 406 is the Nucleophile of the active site.

This sequence belongs to the class I-like SAM-binding methyltransferase superfamily. RNA M5U methyltransferase family. RlmD subfamily.

It carries out the reaction uridine(1939) in 23S rRNA + S-adenosyl-L-methionine = 5-methyluridine(1939) in 23S rRNA + S-adenosyl-L-homocysteine + H(+). Its function is as follows. Catalyzes the formation of 5-methyl-uridine at position 1939 (m5U1939) in 23S rRNA. In Ralstonia nicotianae (strain ATCC BAA-1114 / GMI1000) (Ralstonia solanacearum), this protein is 23S rRNA (uracil(1939)-C(5))-methyltransferase RlmD.